A 126-amino-acid polypeptide reads, in one-letter code: UPF0332 protein glr0978 (126 aa).

The protein belongs to the UPF0332 family.

The chain is UPF0332 protein glr0978 from Gloeobacter violaceus (strain ATCC 29082 / PCC 7421).